Consider the following 651-residue polypeptide: Intraflagellar transport protein 70A (651 aa).

7 TPR repeats span residues Asp-8–Ser-41, Arg-42–Val-75, Pro-140–Lys-173, Asp-175–Glu-207, Leu-372–Thr-405, Ile-410–His-443, and Ile-445–Asn-478. Residues Tyr-494–Asn-521 adopt a coiled-coil conformation. One copy of the TPR 8 repeat lies at Cys-530–Lys-563.

This sequence belongs to the TTC30/dfy-1/fleer family.

It is found in the cell projection. The protein localises to the cilium. Functionally, required for polyglutamylation of axonemal tubulin. Plays a role in anterograde intraflagellar transport (IFT), the process by which cilia precursors are transported from the base of the cilium to the site of their incorporation at the tip. This is Intraflagellar transport protein 70A (ift70a) from Xenopus laevis (African clawed frog).